Here is a 557-residue protein sequence, read N- to C-terminus: Leucine-rich glioma-inactivated protein 1 (557 aa).

Positions 1-34 are cleaved as a signal peptide; it reads MESESIRRMGNACIPLKRIAYFLCLFSVVLLTEG. Residues 35-72 form the LRRNT domain; sequence KKPAKPKCPAVCTCSKDNALCENARSIPRTVPPDVISL. LRR repeat units follow at residues 92–113, 116–137, and 140–161; these read SLQL…AFIG, HLEY…TFRG, and SLIH…IFKG. The 51-residue stretch at 173–223 folds into the LRRCT domain; the sequence is NSFNCDCKLKWLVEWLGHTNATVEDIYCEGPPEYKKRKINSLSPKDFDCII. The N-linked (GlcNAc...) asparagine glycan is linked to asparagine 192. EAR repeat units follow at residues 225-267, 271-313, 317-364, 366-415, 419-462, 464-506, and 510-552; these read EFAK…EWDH, TFRN…KRDG, KFIK…KWNG, GFYS…QWSK, LFIN…KWGG, SFQD…NWDA, and KFVK…KHVI. The N-linked (GlcNAc...) asparagine glycan is linked to asparagine 277. The N-linked (GlcNAc...) asparagine glycan is linked to asparagine 422.

Oligomer. Interacts with KCNA1 within a complex containing KCNA1, KCNA4 and KCNAB1. Can bind to ADAM11 and ADAM23. Part of a complex containing ADAM22, DLG4/PSD95 and CACNG2 (stargazin). Glycosylated. As to expression, expressed in brain. High levels found in hippocampus, thalamic nuclei, neocortex, and molecular and granule cell layers of the cerebellum.

The protein resides in the secreted. Its subcellular location is the synapse. It is found in the cytoplasm. Its function is as follows. Plays a role in suppressing the production of MMP1/3 through the phosphatidylinositol 3-kinase/ERK pathway. Regulates voltage-gated potassium channels assembled from KCNA1, KCNA4 and KCNAB1. It slows down channel inactivation by precluding channel closure mediated by the KCNAB1 subunit. Ligand for ADAM22 that positively regulates synaptic transmission mediated by AMPA-type glutamate receptors. The polypeptide is Leucine-rich glioma-inactivated protein 1 (Lgi1) (Rattus norvegicus (Rat)).